Reading from the N-terminus, the 484-residue chain is tRNA-2-methylthio-N(6)-dimethylallyladenosine synthase (484 aa).

Positions 36 to 153 constitute an MTTase N-terminal domain; the sequence is GKLYIKTHGC…LPELIRARRE (118 aa). Residues C45, C82, C116, C190, C194, and C197 each contribute to the [4Fe-4S] cluster site. The Radical SAM core domain maps to 176 to 415; sequence RAEGPSAFVS…HINAHAASIS (240 aa). In terms of domain architecture, TRAM spans 416–479; that stretch reads QSMVGSVQRV…SNSLRGRIQL (64 aa). A disordered region spans residues 428–450; the sequence is EGPSRRDPNELTGKSENMRPVNF.

It belongs to the methylthiotransferase family. MiaB subfamily. As to quaternary structure, monomer. [4Fe-4S] cluster is required as a cofactor.

Its subcellular location is the cytoplasm. The catalysed reaction is N(6)-dimethylallyladenosine(37) in tRNA + (sulfur carrier)-SH + AH2 + 2 S-adenosyl-L-methionine = 2-methylsulfanyl-N(6)-dimethylallyladenosine(37) in tRNA + (sulfur carrier)-H + 5'-deoxyadenosine + L-methionine + A + S-adenosyl-L-homocysteine + 2 H(+). Its function is as follows. Catalyzes the methylthiolation of N6-(dimethylallyl)adenosine (i(6)A), leading to the formation of 2-methylthio-N6-(dimethylallyl)adenosine (ms(2)i(6)A) at position 37 in tRNAs that read codons beginning with uridine. The polypeptide is tRNA-2-methylthio-N(6)-dimethylallyladenosine synthase (Xanthomonas euvesicatoria pv. vesicatoria (strain 85-10) (Xanthomonas campestris pv. vesicatoria)).